The sequence spans 348 residues: Anthranilate phosphoribosyltransferase (348 aa).

Residues Gly81, 84 to 85, 91 to 94, 109 to 117, and Ser121 contribute to the 5-phospho-alpha-D-ribose 1-diphosphate site; these read GD, NVST, and KHGNRAVSG. Gly81 is a binding site for anthranilate. Position 93 (Ser93) interacts with Mg(2+). Asn112 provides a ligand contact to anthranilate. Arg167 provides a ligand contact to anthranilate. Asp226 and Glu227 together coordinate Mg(2+).

The protein belongs to the anthranilate phosphoribosyltransferase family. As to quaternary structure, homodimer. Requires Mg(2+) as cofactor.

It carries out the reaction N-(5-phospho-beta-D-ribosyl)anthranilate + diphosphate = 5-phospho-alpha-D-ribose 1-diphosphate + anthranilate. The protein operates within amino-acid biosynthesis; L-tryptophan biosynthesis; L-tryptophan from chorismate: step 2/5. Its function is as follows. Catalyzes the transfer of the phosphoribosyl group of 5-phosphorylribose-1-pyrophosphate (PRPP) to anthranilate to yield N-(5'-phosphoribosyl)-anthranilate (PRA). The chain is Anthranilate phosphoribosyltransferase from Stutzerimonas stutzeri (strain A1501) (Pseudomonas stutzeri).